The primary structure comprises 337 residues: tRNA(Ile)-lysidine synthase (337 aa).

40 to 45 provides a ligand contact to ATP; sequence SGGQDS.

The protein belongs to the tRNA(Ile)-lysidine synthase family.

Its subcellular location is the cytoplasm. It carries out the reaction cytidine(34) in tRNA(Ile2) + L-lysine + ATP = lysidine(34) in tRNA(Ile2) + AMP + diphosphate + H(+). Ligates lysine onto the cytidine present at position 34 of the AUA codon-specific tRNA(Ile) that contains the anticodon CAU, in an ATP-dependent manner. Cytidine is converted to lysidine, thus changing the amino acid specificity of the tRNA from methionine to isoleucine. The chain is tRNA(Ile)-lysidine synthase from Parasynechococcus marenigrum (strain WH8102).